The primary structure comprises 161 residues: Probable endopeptidase HI_1314 (161 aa).

An N-terminal signal peptide occupies residues 1 to 18 (MKVYKSFLIATASLFLFA). Residue Cys19 is the site of N-palmitoyl cysteine attachment. A lipid anchor (S-diacylglycerol cysteine) is attached at Cys19. The 123-residue stretch at 39 to 161 (IMAIAMLSEQ…SKAFWQVRRI (123 aa)) folds into the NlpC/P60 domain. Cys69 (nucleophile) is an active-site residue. His122 acts as the Proton acceptor in catalysis. The active site involves His134.

Belongs to the peptidase C40 family.

It is found in the cell membrane. The polypeptide is Probable endopeptidase HI_1314 (Haemophilus influenzae (strain ATCC 51907 / DSM 11121 / KW20 / Rd)).